Consider the following 176-residue polypeptide: ATP synthase subunit b, chloroplastic (176 aa).

Residues 19 to 39 traverse the membrane as a helical segment; sequence LDLLETNIINIFILIIILIYL.

This sequence belongs to the ATPase B chain family. F-type ATPases have 2 components, F(1) - the catalytic core - and F(0) - the membrane proton channel. F(1) has five subunits: alpha(3), beta(3), gamma(1), delta(1), epsilon(1). F(0) has four main subunits: a(1), b(1), b'(1) and c(10-14). The alpha and beta chains form an alternating ring which encloses part of the gamma chain. F(1) is attached to F(0) by a central stalk formed by the gamma and epsilon chains, while a peripheral stalk is formed by the delta, b and b' chains.

It localises to the plastid. The protein resides in the chloroplast thylakoid membrane. Functionally, f(1)F(0) ATP synthase produces ATP from ADP in the presence of a proton or sodium gradient. F-type ATPases consist of two structural domains, F(1) containing the extramembraneous catalytic core and F(0) containing the membrane proton channel, linked together by a central stalk and a peripheral stalk. During catalysis, ATP synthesis in the catalytic domain of F(1) is coupled via a rotary mechanism of the central stalk subunits to proton translocation. Its function is as follows. Component of the F(0) channel, it forms part of the peripheral stalk, linking F(1) to F(0). The chain is ATP synthase subunit b, chloroplastic from Galdieria sulphuraria (Red alga).